Here is a 242-residue protein sequence, read N- to C-terminus: Uridylate kinase (242 aa).

12–15 (KLSG) provides a ligand contact to ATP. Residues 20–25 (GQKGYG) form an involved in allosteric activation by GTP region. Position 54 (Gly-54) interacts with UMP. The ATP site is built by Gly-55 and Arg-59. Residues Asp-74 and 135 to 142 (TGNPYFST) each bind UMP. ATP is bound by residues Gln-163, Tyr-168, and Asp-171.

Belongs to the UMP kinase family. Homohexamer.

It localises to the cytoplasm. It catalyses the reaction UMP + ATP = UDP + ADP. It functions in the pathway pyrimidine metabolism; CTP biosynthesis via de novo pathway; UDP from UMP (UMPK route): step 1/1. Its activity is regulated as follows. Allosterically activated by GTP. Inhibited by UTP. In terms of biological role, catalyzes the reversible phosphorylation of UMP to UDP. This Desulforamulus reducens (strain ATCC BAA-1160 / DSM 100696 / MI-1) (Desulfotomaculum reducens) protein is Uridylate kinase.